Consider the following 78-residue polypeptide: DNA gyrase inhibitor YacG (78 aa).

Positions 7, 10, 26, and 30 each coordinate Zn(2+).

This sequence belongs to the DNA gyrase inhibitor YacG family. As to quaternary structure, interacts with GyrB. Zn(2+) serves as cofactor.

Functionally, inhibits all the catalytic activities of DNA gyrase by preventing its interaction with DNA. Acts by binding directly to the C-terminal domain of GyrB, which probably disrupts DNA binding by the gyrase. The chain is DNA gyrase inhibitor YacG from Shewanella piezotolerans (strain WP3 / JCM 13877).